Reading from the N-terminus, the 805-residue chain is Leucine--tRNA ligase (805 aa).

A 'HIGH' region motif is present at residues 40–51 (PYPSGAGLHVGH). A 'KMSKS' region motif is present at residues 576–580 (KMSKS). Lys579 serves as a coordination point for ATP.

This sequence belongs to the class-I aminoacyl-tRNA synthetase family.

The protein resides in the cytoplasm. It catalyses the reaction tRNA(Leu) + L-leucine + ATP = L-leucyl-tRNA(Leu) + AMP + diphosphate. This chain is Leucine--tRNA ligase, found in Anoxybacillus flavithermus (strain DSM 21510 / WK1).